The chain runs to 280 residues: Pantothenate synthetase (280 aa).

26–33 (MGNLHDGH) contributes to the ATP binding site. Histidine 33 serves as the catalytic Proton donor. Residue glutamine 57 coordinates (R)-pantoate. Glutamine 57 lines the beta-alanine pocket. Position 147-150 (147-150 (GKKD)) interacts with ATP. Glutamine 153 is a binding site for (R)-pantoate. 184–187 (LSSR) is a binding site for ATP.

This sequence belongs to the pantothenate synthetase family. In terms of assembly, homodimer.

Its subcellular location is the cytoplasm. It catalyses the reaction (R)-pantoate + beta-alanine + ATP = (R)-pantothenate + AMP + diphosphate + H(+). It participates in cofactor biosynthesis; (R)-pantothenate biosynthesis; (R)-pantothenate from (R)-pantoate and beta-alanine: step 1/1. Its function is as follows. Catalyzes the condensation of pantoate with beta-alanine in an ATP-dependent reaction via a pantoyl-adenylate intermediate. This is Pantothenate synthetase from Verminephrobacter eiseniae (strain EF01-2).